The sequence spans 66 residues: MRLFILLSCLLAWVLAAPYIDQEDALRVLNAYLEQFGPGSDRVYYVAEDDHGSMKRGLGPRPLRFG.

A signal peptide spans 1-16 (MRLFILLSCLLAWVLA).

Belongs to the FARP (FMRFamide related peptide) family. In terms of processing, may be processed by convertase egl-3. Expressed in the ADL, ASE and ASH sensory neurons, the URA motor neurons and the MC, M2 and M4 pharyngeal neurons.

Its subcellular location is the secreted. Its function is as follows. FMRFamide-like neuropeptide. Involved in modulating locomotion quiescence during the sleep-like state called lethargus which occurs during molting between larval and adult stages, acting via the G-protein coupled receptor npr-1. Plays a role in modulating social and feeding behavior. Ligand to G-protein coupled receptor npr-1. The protein is FMRFamide-like neuropeptide 21 of Caenorhabditis elegans.